A 103-amino-acid chain; its full sequence is Large ribosomal subunit protein bL21 (103 aa).

This sequence belongs to the bacterial ribosomal protein bL21 family. As to quaternary structure, part of the 50S ribosomal subunit. Contacts protein L20.

This protein binds to 23S rRNA in the presence of protein L20. The protein is Large ribosomal subunit protein bL21 of Shewanella piezotolerans (strain WP3 / JCM 13877).